The primary structure comprises 334 residues: Ornithine carbamoyltransferase (334 aa).

Carbamoyl phosphate contacts are provided by residues 57–60 (STRT), Q84, R108, and 135–138 (HPTQ). L-ornithine-binding positions include N168, D232, and 236–237 (SM). Residues 274-275 (CL) and R321 contribute to the carbamoyl phosphate site.

It belongs to the aspartate/ornithine carbamoyltransferase superfamily. OTCase family.

The protein localises to the cytoplasm. It carries out the reaction carbamoyl phosphate + L-ornithine = L-citrulline + phosphate + H(+). It participates in amino-acid degradation; L-arginine degradation via ADI pathway; carbamoyl phosphate from L-arginine: step 2/2. Reversibly catalyzes the transfer of the carbamoyl group from carbamoyl phosphate (CP) to the N(epsilon) atom of ornithine (ORN) to produce L-citrulline. The sequence is that of Ornithine carbamoyltransferase from Haemophilus influenzae (strain PittGG).